The following is a 248-amino-acid chain: NADP-dependent 3-hydroxy acid dehydrogenase YdfG (248 aa).

NADP(+)-binding positions include 7-12, 32-33, 54-55, and asparagine 81; these read GATAGF, RR, and DV. Serine 134 is a substrate binding site. NADP(+) is bound by residues tyrosine 147, lysine 151, and 177–185; that span reads PGLVGGTEF. The active-site Proton acceptor is tyrosine 147.

This sequence belongs to the short-chain dehydrogenases/reductases (SDR) family. In terms of assembly, homotetramer.

It carries out the reaction 3-hydroxypropanoate + NADP(+) = 3-oxopropanoate + NADPH + H(+). The enzyme catalyses L-allo-threonine + NADP(+) = aminoacetone + CO2 + NADPH. Its function is as follows. NADP-dependent dehydrogenase with broad substrate specificity acting on 3-hydroxy acids. Catalyzes the NADP-dependent oxidation of L-allo-threonine to L-2-amino-3-keto-butyrate, which is spontaneously decarboxylated into aminoacetone. Also acts on D-threonine, L-serine, D-serine, D-3-hydroxyisobutyrate, L-3-hydroxyisobutyrate, D-glycerate and L-glycerate. Able to catalyze the reduction of the malonic semialdehyde to 3-hydroxypropionic acid. YdfG is apparently supplementing RutE, the presumed malonic semialdehyde reductase involved in pyrimidine degradation since both are able to detoxify malonic semialdehyde. The protein is NADP-dependent 3-hydroxy acid dehydrogenase YdfG of Escherichia coli O6:H1 (strain CFT073 / ATCC 700928 / UPEC).